The chain runs to 358 residues: MLKTPLYESHIAANAKMVDFSGWSMPINYGSQIQEHNNVREDCGIFDVSHMLAVDIQGSEAEKFLRYLLANDVAKLQENKAQYGCMLNHDAGIVDDLITYKVTDEHFRIVVNAGNRESDVAWFNQNAQNFDVAITPQTDLAIVAVQGPKAVAVIKRVVTKEIAAEIEALLPFSFKFFSKWMVARTGYTGEDGFEVILPATQVKKFWDSLLENGAQPAGLGARDTLRLEAGMHLYGADMDTSTTPLERGLGWSVDLSDEHRDFIGKKAYLAKKAQGVDTKWVGVVLKTKGVLRAGQEIDFDNGEKGYITSGSFSPTLKVAIGLAYVPKQADNPVVNIRGKELEVELVKPKFVKNGKSLI.

The protein belongs to the GcvT family. In terms of assembly, the glycine cleavage system is composed of four proteins: P, T, L and H.

It catalyses the reaction N(6)-[(R)-S(8)-aminomethyldihydrolipoyl]-L-lysyl-[protein] + (6S)-5,6,7,8-tetrahydrofolate = N(6)-[(R)-dihydrolipoyl]-L-lysyl-[protein] + (6R)-5,10-methylene-5,6,7,8-tetrahydrofolate + NH4(+). Its function is as follows. The glycine cleavage system catalyzes the degradation of glycine. The protein is Aminomethyltransferase of Francisella tularensis subsp. tularensis (strain WY96-3418).